A 197-amino-acid chain; its full sequence is Short chain dehydrogenase ausX (197 aa).

NADP(+)-binding residues include isoleucine 49, aspartate 95, arginine 157, and tyrosine 189. Residue tyrosine 189 is the Proton acceptor of the active site. Tyrosine 189 serves as the catalytic Proton donor.

This sequence belongs to the short-chain dehydrogenases/reductases (SDR) family.

Its pathway is secondary metabolite biosynthesis; terpenoid biosynthesis. Functionally, short chain dehydrogenase; part of the gene cluster A that mediates the biosynthesis of austinol and dehydroaustinol, two fungal meroterpenoids. The first step of the pathway is the synthesis of 3,5-dimethylorsellinic acid by the polyketide synthase ausA. 3,5-dimethylorsellinic acid is then prenylated by the polyprenyl transferase ausN. Further epoxidation by the FAD-dependent monooxygenase ausM and cyclization by the probable terpene cyclase ausL lead to the formation of protoaustinoid A. Protoaustinoid A is then oxidized to spiro-lactone preaustinoid A3 by the combined action of the FAD-binding monooxygenases ausB and ausC, and the dioxygenase ausE. Acid-catalyzed keto-rearrangement and ring contraction of the tetraketide portion of preaustinoid A3 by ausJ lead to the formation of preaustinoid A4. The aldo-keto reductase ausK, with the help of ausH, is involved in the next step by transforming preaustinoid A4 into isoaustinone which is in turn hydroxylated by the P450 monooxygenase ausI to form austinolide. Finally, the cytochrome P450 monooxygenase ausG modifies austinolide to austinol. Austinol can be further modified to dehydroaustinol which forms a diffusible complex with diorcinol that initiates conidiation. Due to genetic rearrangements of the clusters and the subsequent loss of some enzymes, the end products of the Emericella nidulans austinoid biosynthesis clusters are austinol and dehydroaustinol, even if additional enzymes, such as the O-acetyltransferase ausQ and the cytochrome P450 monooxygenase ausR are still functional. This is Short chain dehydrogenase ausX from Emericella nidulans (strain FGSC A4 / ATCC 38163 / CBS 112.46 / NRRL 194 / M139) (Aspergillus nidulans).